A 445-amino-acid chain; its full sequence is UDP-N-acetylmuramoylalanine--D-glutamate ligase (445 aa).

117–123 (GSNGKTT) provides a ligand contact to ATP.

This sequence belongs to the MurCDEF family.

The protein resides in the cytoplasm. The catalysed reaction is UDP-N-acetyl-alpha-D-muramoyl-L-alanine + D-glutamate + ATP = UDP-N-acetyl-alpha-D-muramoyl-L-alanyl-D-glutamate + ADP + phosphate + H(+). It participates in cell wall biogenesis; peptidoglycan biosynthesis. Cell wall formation. Catalyzes the addition of glutamate to the nucleotide precursor UDP-N-acetylmuramoyl-L-alanine (UMA). The protein is UDP-N-acetylmuramoylalanine--D-glutamate ligase of Neisseria meningitidis serogroup A / serotype 4A (strain DSM 15465 / Z2491).